The primary structure comprises 736 residues: Nucleoporin nup60 (736 aa).

A disordered region spans residues 1 to 46 (MSSGPIRTLHKGKAARNRTPYDRIAASKDGNHSNGPQTPSKSIFQR). Over residues 19–31 (TPYDRIAASKDGN) the composition is skewed to basic and acidic residues. The span at 32 to 43 (HSNGPQTPSKSI) shows a compositional bias: polar residues. 4 positions are modified to phosphoserine: Ser157, Ser159, Ser161, and Ser162. 5 disordered regions span residues 178 to 210 (RAAA…NSAK), 295 to 321 (DTSF…KTPS), 338 to 519 (TPSI…PNET), 565 to 614 (AVTD…RSLF), and 647 to 701 (EQAE…FPKF). Composition is skewed to polar residues over residues 196–210 (RTSS…NSAK) and 295–314 (DTSF…TTAN). Residues 375–397 (QIRPSSEKSEPEKKEPSAFETLE) are compositionally biased toward basic and acidic residues. The span at 456-473 (SATTDKPSPPVSSIFSFN) shows a compositional bias: polar residues. 2 stretches are compositionally biased toward low complexity: residues 474–505 (APSA…TSFS) and 573–587 (EVSS…TMIS). The segment covering 588–597 (QPNTGFSFGS) has biased composition (polar residues). Positions 664-692 (EVEKPSAEGTNEHKQDATMTLEKTDKQGS) are enriched in basic and acidic residues.

In terms of assembly, component of the nuclear pore complex (NPC). NPC constitutes the exclusive means of nucleocytoplasmic transport. NPCs allow the passive diffusion of ions and small molecules and the active, nuclear transport receptor-mediated bidirectional transport of macromolecules such as proteins, RNAs, ribonucleoparticles (RNPs), and ribosomal subunits across the nuclear envelope.

It is found in the nucleus. The protein resides in the nuclear pore complex. Its subcellular location is the nucleus membrane. Functions as a component of the nuclear pore complex (NPC). NPC components, collectively referred to as nucleoporins (NUPs), can play the role of both NPC structural components and of docking or interaction partners for transiently associated nuclear transport factors. Active directional transport is assured by both, a Phe-Gly (FG) repeat affinity gradient for these transport factors across the NPC and a transport cofactor concentration gradient across the nuclear envelope. In Schizosaccharomyces pombe (strain 972 / ATCC 24843) (Fission yeast), this protein is Nucleoporin nup60 (nup60).